A 284-amino-acid polypeptide reads, in one-letter code: Tropomyosin-1 (284 aa).

Positions 1–284 (MDGIKKKMIA…DQTFAELTGY (284 aa)) form a coiled coil. Residues 111 to 131 (TKLEEASKTAEESERGRKDLE) form a disordered region.

This sequence belongs to the tropomyosin family. Homodimer.

Tropomyosin, in association with the troponin complex, plays a central role in the calcium dependent regulation of muscle contraction. The polypeptide is Tropomyosin-1 (Schistosoma mansoni (Blood fluke)).